We begin with the raw amino-acid sequence, 351 residues long: Pentatricopeptide repeat-containing protein At3g56030, mitochondrial (351 aa).

Residues 1 to 41 constitute a mitochondrion transit peptide; sequence MFRLKPLISVDLNQTMSLLRRFVKEANNSRFLLQSISGRSF. PPR repeat units lie at residues 124–158, 159–193, 194–224, and 232–266; these read RKHS…EFGL, STCV…AIPV, DVTS…MEEE, and DTRT…GLSV.

It belongs to the PPR family. P subfamily.

The protein resides in the mitochondrion. The chain is Pentatricopeptide repeat-containing protein At3g56030, mitochondrial from Arabidopsis thaliana (Mouse-ear cress).